A 427-amino-acid chain; its full sequence is tRNA(Ile)-lysidine synthase (427 aa).

Ser-25 to Ser-30 serves as a coordination point for ATP.

It belongs to the tRNA(Ile)-lysidine synthase family.

It localises to the cytoplasm. It carries out the reaction cytidine(34) in tRNA(Ile2) + L-lysine + ATP = lysidine(34) in tRNA(Ile2) + AMP + diphosphate + H(+). Its function is as follows. Ligates lysine onto the cytidine present at position 34 of the AUA codon-specific tRNA(Ile) that contains the anticodon CAU, in an ATP-dependent manner. Cytidine is converted to lysidine, thus changing the amino acid specificity of the tRNA from methionine to isoleucine. This Histophilus somni (strain 129Pt) (Haemophilus somnus) protein is tRNA(Ile)-lysidine synthase.